Reading from the N-terminus, the 1111-residue chain is NBPF family member NBPF9 (1111 aa).

Residues 70–130 (MLRNERQFKE…RSLNEHLQAL (61 aa)) are a coiled coil. Positions 161–198 (KLSPENDEDEDEDVQVEEDEKVLESSAPREVQKAEESK) are disordered. Over residues 165–181 (ENDEDEDEDVQVEEDEK) the composition is skewed to acidic residues. The Olduvai 1 domain maps to 165–259 (ENDEDEDEDV…ECQDALNILP (95 aa)). Positions 341-401 (MLRNERQFKE…RSLNEHLQAL (61 aa)) form a coiled coil. Olduvai domains lie at 436-528 (ENDN…HIIP), 529-600 (ENES…VDIG), 601-692 (RHRW…PSCP), 695-750 (SREL…LDLD), 751-843 (RIKK…RSKK), 844-919 (KRRR…LDVD), 920-1012 (RIKK…RSKK), and 1013-1111 (ERRR…IFPQ). Disordered regions lie at residues 451–474 (EKVQKSSAPREMQKAEEKEVPEDS) and 510–569 (TLIG…STPS). Acidic residues-rich tracts occupy residues 530 to 539 (NESDDEEEEE) and 550 to 562 (ESEEEEVPQESWD). Disordered regions lie at residues 829-871 (KKGK…LDEK) and 999-1033 (KGKGKKRRGRRSKKERRRGRKEGEEDQNPPCPRLN). Basic residues-rich tracts occupy residues 831-849 (GKGKKRRGRRSKKKRRRGR) and 1000-1018 (GKGKKRRGRRSKKERRRGR).

This sequence belongs to the NBPF family. Expressed in a neuroblastoma cell line.

It localises to the cytoplasm. The sequence is that of NBPF family member NBPF9 from Homo sapiens (Human).